The chain runs to 457 residues: Multidrug resistance protein MdtK (457 aa).

The next 12 membrane-spanning stretches (helical) occupy residues 11-31 (LLAL…MGVV), 53-73 (IWLP…PIVA), 93-113 (WLAT…RFII), 127-147 (AIGF…YQVL), 160-180 (GMII…AFIY), 188-208 (LGGI…FLMM), 243-263 (LPVG…ALLV), 276-296 (IALN…IAAT), 316-336 (ITAL…SIIF), 357-377 (LMLF…GSGV), 387-407 (IFFI…YLLG), and 416-436 (MGPA…AIMM).

Belongs to the multi antimicrobial extrusion (MATE) (TC 2.A.66.1) family. MdtK subfamily.

The protein resides in the cell inner membrane. Multidrug efflux pump that functions probably as a Na(+)/drug antiporter. The chain is Multidrug resistance protein MdtK from Proteus mirabilis (strain HI4320).